The following is a 1072-amino-acid chain: DNA-directed RNA polymerase subunit beta (1072 aa).

It belongs to the RNA polymerase beta chain family. As to quaternary structure, in plastids the minimal PEP RNA polymerase catalytic core is composed of four subunits: alpha, beta, beta', and beta''. When a (nuclear-encoded) sigma factor is associated with the core the holoenzyme is formed, which can initiate transcription.

It localises to the plastid. Its subcellular location is the chloroplast. It carries out the reaction RNA(n) + a ribonucleoside 5'-triphosphate = RNA(n+1) + diphosphate. DNA-dependent RNA polymerase catalyzes the transcription of DNA into RNA using the four ribonucleoside triphosphates as substrates. This chain is DNA-directed RNA polymerase subunit beta, found in Nasturtium officinale (Watercress).